Here is a 469-residue protein sequence, read N- to C-terminus: Abscisic acid 8'-hydroxylase CYP707A2 (469 aa).

The chain crosses the membrane as a helical span at residues 3–23 (FVSMLCLFTFISLTLLLIHSI). Cys414 contributes to the heme binding site.

This sequence belongs to the cytochrome P450 family. It depends on heme as a cofactor. Expressed at low levels in fruit.

It is found in the membrane. It catalyses the reaction 2-cis-(+)-abscisate + reduced [NADPH--hemoprotein reductase] + O2 = (+)-8'-hydroxyabscisate + oxidized [NADPH--hemoprotein reductase] + H2O + H(+). It participates in plant hormone degradation; abscisic acid degradation. In terms of biological role, negative regulator of fruit ripening involved in the oxidative degradation of abscisic acid (ABA). The polypeptide is Abscisic acid 8'-hydroxylase CYP707A2 (Solanum lycopersicum (Tomato)).